Consider the following 426-residue polypeptide: Gamma-glutamyl phosphate reductase (426 aa).

This sequence belongs to the gamma-glutamyl phosphate reductase family.

It is found in the cytoplasm. The catalysed reaction is L-glutamate 5-semialdehyde + phosphate + NADP(+) = L-glutamyl 5-phosphate + NADPH + H(+). Its pathway is amino-acid biosynthesis; L-proline biosynthesis; L-glutamate 5-semialdehyde from L-glutamate: step 2/2. In terms of biological role, catalyzes the NADPH-dependent reduction of L-glutamate 5-phosphate into L-glutamate 5-semialdehyde and phosphate. The product spontaneously undergoes cyclization to form 1-pyrroline-5-carboxylate. This Cupriavidus necator (strain ATCC 17699 / DSM 428 / KCTC 22496 / NCIMB 10442 / H16 / Stanier 337) (Ralstonia eutropha) protein is Gamma-glutamyl phosphate reductase.